We begin with the raw amino-acid sequence, 292 residues long: Seed lectin (292 aa).

Positions 1–37 (MATSNSRPHLLQTHKPFSVVLAISITFFLLLLNKVNS) are cleaved as a signal peptide. 2 N-linked (GlcNAc...) asparagine glycosylation sites follow: Asn-82 and Asn-154. Mn(2+) is bound by residues Asp-163 and Asp-165. 4 residues coordinate Ca(2+): Asp-165, His-167, Asn-169, and Asp-172. Positions 172 and 177 each coordinate Mn(2+). Asn-186 is a glycosylation site (N-linked (GlcNAc...) asparagine).

The protein belongs to the leguminous lectin family.

Its function is as follows. Mannose/glucose-specific lectin. This chain is Seed lectin, found in Styphnolobium japonicum (Japanese pagoda tree).